A 1194-amino-acid polypeptide reads, in one-letter code: DNA polymerase catalytic subunit (1194 aa).

The protein belongs to the DNA polymerase type-B family. As to quaternary structure, forms a complex with the ssDNA-binding protein, the DNA polymerase processivity factor, and the alkaline exonuclease. Interacts with the helicase-primase complex composed of the primase, the helicase and the primase-associated factor; this interaction may coordinate leading and lagging strand DNA synthesis at the replication fork.

Its subcellular location is the host nucleus. The catalysed reaction is DNA(n) + a 2'-deoxyribonucleoside 5'-triphosphate = DNA(n+1) + diphosphate. The enzyme catalyses Endonucleolytic cleavage to 5'-phosphomonoester.. In terms of biological role, replicates viral genomic DNA. The replication complex is composed of six viral proteins: the DNA polymerase, processivity factor, primase, primase-associated factor, helicase, and ssDNA-binding protein. Additionally, the polymerase contains an intrinsic ribonuclease H (RNase H) activity that specifically degrades RNA/DNA heteroduplexes or duplex DNA substrates in the 5' to 3' direction. Therefore, it can catalyze the excision of the RNA primers that initiate the synthesis of Okazaki fragments at a replication fork during viral DNA replication. In Varicella-zoster virus (strain Dumas) (HHV-3), this protein is DNA polymerase catalytic subunit.